We begin with the raw amino-acid sequence, 297 residues long: Dipicolinate synthase subunit A (297 aa).

NADP(+) is bound by residues Arg164–Thr165, Arg185, Thr203, Leu242–Ser244, and Ala264–Leu267.

Dipicolinate synthase likely consists of DpaA and DpaB, since both proteins are required for DPA synthesis.

It catalyses the reaction (S)-2,3-dihydrodipicolinate + NADP(+) = dipicolinate + NADPH + H(+). Together with DpaB, catalyzes the conversion of dihydrodipicolinate to dipicolinate (DPA), which constitutes up to 10% of the dry weight of the spore. The chain is Dipicolinate synthase subunit A (dpaA) from Bacillus subtilis (strain 168).